A 271-amino-acid polypeptide reads, in one-letter code: MGLEEKLPGGVLLASVEKLANWSRRSSLWPATFGLACCAIEMMSTGAGRYDLSRFGMEVFRASPRQADLMIVAGRVSQKMAPVLRQIYDQMPEPKWVLSMGVCASSGGMFNNYAIVQGVDHIVPVDMYLPGCPPRPEMLMDAIIKLHEKILAGPISGRIEHTKIGSSPYPKPIEVATARAGLPEGAFDTRTLSVNDRKRFSIPAGAPAPTGGGAVEPALDTRRPAALAPPSVFGRAKRIPVDPKPSDEARAHGPGPTTESIGDVDGPDRGI.

[4Fe-4S] cluster-binding residues include Cys-37, Cys-38, Cys-103, and Cys-132. A disordered region spans residues Leu-227–Ile-271. The segment covering Ile-239–Ala-251 has biased composition (basic and acidic residues).

It belongs to the complex I 20 kDa subunit family. NDH-1 is composed of 14 different subunits. Subunits NuoB, C, D, E, F, and G constitute the peripheral sector of the complex. The cofactor is [4Fe-4S] cluster.

The protein resides in the cell membrane. It carries out the reaction a quinone + NADH + 5 H(+)(in) = a quinol + NAD(+) + 4 H(+)(out). In terms of biological role, NDH-1 shuttles electrons from NADH, via FMN and iron-sulfur (Fe-S) centers, to quinones in the respiratory chain. The immediate electron acceptor for the enzyme in this species is believed to be a menaquinone. Couples the redox reaction to proton translocation (for every two electrons transferred, four hydrogen ions are translocated across the cytoplasmic membrane), and thus conserves the redox energy in a proton gradient. This Frankia casuarinae (strain DSM 45818 / CECT 9043 / HFP020203 / CcI3) protein is NADH-quinone oxidoreductase subunit B.